We begin with the raw amino-acid sequence, 62 residues long: Photosystem II reaction center protein Z (62 aa).

The next 2 helical transmembrane spans lie at 8-28 and 41-61; these read SVFALIILSFLLVIGVPVVLA and FSGASLWIGLVFLVGILNSFI.

It belongs to the PsbZ family. PSII is composed of 1 copy each of membrane proteins PsbA, PsbB, PsbC, PsbD, PsbE, PsbF, PsbH, PsbI, PsbJ, PsbK, PsbL, PsbM, PsbT, PsbY, PsbZ, Psb30/Ycf12, at least 3 peripheral proteins of the oxygen-evolving complex and a large number of cofactors. It forms dimeric complexes.

It is found in the plastid. Its subcellular location is the chloroplast thylakoid membrane. May control the interaction of photosystem II (PSII) cores with the light-harvesting antenna, regulates electron flow through the 2 photosystem reaction centers. PSII is a light-driven water plastoquinone oxidoreductase, using light energy to abstract electrons from H(2)O, generating a proton gradient subsequently used for ATP formation. In Staurastrum punctulatum (Green alga), this protein is Photosystem II reaction center protein Z.